The sequence spans 181 residues: MATEPEAAEPVVPSLVDRYFTRWYKPDVKGKFCEDHCILQHSNRICVITLAESHPVLQSGKTIKSISYQISTNCSRLQNKVSGKFKRGAQFLTELAPLCKIYCSDGEEYTVSSCVRGRLMEVNENILHKPSILQEKPSTEGYIAVVLPKFEESKSITEGLLTQKQYEEVMVKRINATTATS.

It belongs to the ABITRAM family. As to quaternary structure, interacts with F-actin. Interacts with G-actin.

The protein resides in the nucleus speckle. Its subcellular location is the cell projection. The protein localises to the lamellipodium. It localises to the nucleus. It is found in the growth cone. The protein resides in the dendrite. Functionally, actin-binding protein that regulates actin polymerization, filopodia dynamics and increases the branching of proximal dendrites of developing neurons. The protein is Protein Abitram of Homo sapiens (Human).